The following is a 213-amino-acid chain: Uridine kinase (213 aa).

13 to 20 contacts ATP; that stretch reads GASASGKS.

This sequence belongs to the uridine kinase family.

The protein localises to the cytoplasm. The catalysed reaction is uridine + ATP = UMP + ADP + H(+). The enzyme catalyses cytidine + ATP = CMP + ADP + H(+). The protein operates within pyrimidine metabolism; CTP biosynthesis via salvage pathway; CTP from cytidine: step 1/3. It participates in pyrimidine metabolism; UMP biosynthesis via salvage pathway; UMP from uridine: step 1/1. The polypeptide is Uridine kinase (Histophilus somni (strain 129Pt) (Haemophilus somnus)).